A 1005-amino-acid polypeptide reads, in one-letter code: Translocated actin-recruiting phosphoprotein (1005 aa).

The segment covering 1–10 (MTNSISGDQP) has biased composition (polar residues). 7 disordered regions span residues 1–36 (MTNS…SVST), 74–128 (PTVT…DYEP), 191–214 (SIDD…NSLR), 343–365 (SIDD…LNSL), 611–645 (WGTQ…TPSS), 661–748 (NIRD…DGPA), and 792–847 (TGTS…TSLM). Composition is skewed to low complexity over residues 11 to 36 (TVTT…SVST) and 74 to 121 (PTVT…SSDH). Composition is skewed to polar residues over residues 191 to 205 (SIDD…NTSG) and 343 to 357 (SIDD…NTSG). Low complexity-rich tracts occupy residues 661–700 (NIRD…TDDI), 715–734 (GDIS…VSSS), and 831–846 (STTT…TTSL).

It belongs to the chlamydial CPn_0572/CT_456/TC_0741 family. In terms of processing, phosphorylated on a tyrosine on attachment to the host cell. Tyrosine phosphorylation is temporally and spatially associated with recruitment of actin to the site of chlamydial entry. Phosphorylated Tarp seems to remain cytoplasmically exposed on the inclusion membrane at one side of internalized elementary bodies for several hours after entry.

The protein localises to the secreted. Appears to initiate or participate in signaling events that regulate the actin recruitment, which ultimately leads to internalization. The chain is Translocated actin-recruiting phosphoprotein (tarP) from Chlamydia trachomatis serovar L2 (strain ATCC VR-902B / DSM 19102 / 434/Bu).